We begin with the raw amino-acid sequence, 561 residues long: Potassium-transporting ATPase potassium-binding subunit (561 aa).

10 helical membrane passes run 4–24, 65–85, 134–154, 177–197, 253–273, 285–305, 380–400, 417–437, 484–504, and 528–548; these read IIMQDVFFIVLLLVLAIPLGI, AGSVLAFSAIGFVFVMAVLML, GLTVQNFVSAATGIAVLFAVI, LYILLPLSLVLAILLVSQGVV, FTNLIEMLAILLIPVALVVMF, AIMTAMMIVFVVGIVAITISE, GLYGMIGFIILTVFIAGLLVG, MVCLLILVPPLLTLFGTAFAV, MVGALMMLFARFIPLIAALYL, and FIGLLIGVVVLVGALSFLPAL.

This sequence belongs to the KdpA family. The system is composed of three essential subunits: KdpA, KdpB and KdpC.

The protein localises to the cell membrane. Its function is as follows. Part of the high-affinity ATP-driven potassium transport (or Kdp) system, which catalyzes the hydrolysis of ATP coupled with the electrogenic transport of potassium into the cytoplasm. This subunit binds the extracellular potassium ions and delivers the ions to the membrane domain of KdpB through an intramembrane tunnel. This is Potassium-transporting ATPase potassium-binding subunit from Listeria welshimeri serovar 6b (strain ATCC 35897 / DSM 20650 / CCUG 15529 / CIP 8149 / NCTC 11857 / SLCC 5334 / V8).